The chain runs to 331 residues: Autoinducer 2 import system permease protein LsrC (331 aa).

9 helical membrane-spanning segments follow: residues 14 to 34 (LIAILCLFGLLSVIDHQYFSL), 39 to 59 (LVFSSAQILILLAIGATLVML), 70 to 90 (IAGLCAVIMGMSLNAGFNLPV), 93 to 113 (LLTLLLGMCAGFINGALVTWL), 115 to 135 (IPAIVTTLGTLGLYRGLMLLL), 157 to 177 (LNISPIGWLLMILILAMAWIL), 206 to 226 (IQIIAFSVNGIMAALAGIVFA), 252 to 272 (GISLLGGTGTVIGAILGAFFL), and 284 to 304 (LPAWWNDFIAGFVLLAVLIFD).

It belongs to the binding-protein-dependent transport system permease family. AraH/RbsC subfamily. In terms of assembly, the complex is composed of two ATP-binding proteins (LsrA), two transmembrane proteins (LsrC and LsrD) and a solute-binding protein (LsrB).

It is found in the cell inner membrane. Part of the ABC transporter complex LsrABCD involved in autoinducer 2 (AI-2) import. Probably responsible for the translocation of the substrate across the membrane. The chain is Autoinducer 2 import system permease protein LsrC (lsrC) from Photorhabdus luminescens (Xenorhabdus luminescens).